The chain runs to 203 residues: Glycerol-3-phosphate acyltransferase (203 aa).

5 helical membrane-spanning segments follow: residues 6–26 (LTLA…AVLV), 56–76 (AAAM…YVAF), 82–102 (AVSL…PIFF), 118–138 (APIG…VVLI), and 141–161 (YSSL…WYFD).

The protein belongs to the PlsY family. Probably interacts with PlsX.

The protein resides in the cell inner membrane. The enzyme catalyses an acyl phosphate + sn-glycerol 3-phosphate = a 1-acyl-sn-glycero-3-phosphate + phosphate. The protein operates within lipid metabolism; phospholipid metabolism. Functionally, catalyzes the transfer of an acyl group from acyl-phosphate (acyl-PO(4)) to glycerol-3-phosphate (G3P) to form lysophosphatidic acid (LPA). This enzyme utilizes acyl-phosphate as fatty acyl donor, but not acyl-CoA or acyl-ACP. The protein is Glycerol-3-phosphate acyltransferase of Shewanella loihica (strain ATCC BAA-1088 / PV-4).